Consider the following 467-residue polypeptide: Keratin, type 1 cytoskeletal 11 (467 aa).

The head stretch occupies residues 1–100 (MSYSSFSIAQ…GGTDFLLGTS (100 aa)). Residues 12–30 (SRVPSLSGTRSSSSYSLKS) are compositionally biased toward low complexity. Residues 12–32 (SRVPSLSGTRSSSSYSLKSDL) are disordered. Positions 101 to 137 (GKEAMQNLNDRLADYLARVRSLEDRNRELEQKIREWY) are coil 1A. The IF rod domain maps to 101 to 413 (GKEAMQNLND…TLLEGDAGRS (313 aa)). Residues 138-156 (EKQGAGTKRKDFSHYFKII) form a linker 1 region. The coil 1B stretch occupies residues 157–248 (ADLQNQINAG…SHDEDMKALR (92 aa)). Residues 249–268 (SQLGGQVNVEVDAAPAEDLT) form a linker 12 region. The segment at 269 to 416 (KKLEIIRQRY…EGDAGRSHSS (148 aa)) is coil 2. A disordered region spans residues 409-430 (DAGRSHSSSHLSSTVSKDKVPV). Residues 417 to 463 (SHLSSTVSKDKVPVSSPNVITKVRTIVEEKINGQVISKKEYEGSPDQ) form a tail region.

This sequence belongs to the intermediate filament family. As to quaternary structure, heterotetramer of two type I and two type II keratins. Expressed in the outermost cell layers of skin epidermis (at protein level).

The chain is Keratin, type 1 cytoskeletal 11 from Protopterus aethiopicus (Marbled lungfish).